Reading from the N-terminus, the 431-residue chain is Glutamate-1-semialdehyde 2,1-aminomutase (431 aa).

Lys-265 is subject to N6-(pyridoxal phosphate)lysine.

Belongs to the class-III pyridoxal-phosphate-dependent aminotransferase family. HemL subfamily. Homodimer. It depends on pyridoxal 5'-phosphate as a cofactor.

It is found in the cytoplasm. It carries out the reaction (S)-4-amino-5-oxopentanoate = 5-aminolevulinate. The protein operates within porphyrin-containing compound metabolism; protoporphyrin-IX biosynthesis; 5-aminolevulinate from L-glutamyl-tRNA(Glu): step 2/2. The sequence is that of Glutamate-1-semialdehyde 2,1-aminomutase from Aliivibrio fischeri (strain ATCC 700601 / ES114) (Vibrio fischeri).